A 2664-amino-acid polypeptide reads, in one-letter code: Non-reducing polyketide synthase sorB (2664 aa).

The interval 21 to 45 is disordered; the sequence is KSAPQSGNTADDIPNAASQPDTTST. The segment covering 36 to 45 has biased composition (polar residues); that stretch reads AASQPDTTST. Residues 112–281 are N-terminal acylcarrier protein transacylase domain (SAT); that stretch reads ADHARRLAEW…TTPSRIASDL (170 aa). C184 (nucleophile; for transacylase activity) is an active-site residue. Catalysis depends on H302, which acts as the Proton donor/acceptor; for transacylase activity. Residues 428–849 form the Ketosynthase family 3 (KS3) domain; sequence DNDIAVIGMS…GSNASMVIKQ (422 aa). Residues C596, H731, and H772 each act as for beta-ketoacyl synthase activity in the active site. Residues 961–1276 are malonyl-CoA:ACP transacylase (MAT) domain; sequence CFGGQVSKSV…TQGTRQLADV (316 aa). Positions 1345–1477 are N-terminal hotdog fold; it reads PGLYTFMGYG…GQLEFHRADD (133 aa). The PKS/mFAS DH domain occupies 1345–1663; sequence PGLYTFMGYG…FSARSMSELF (319 aa). A product template (PT) domain region spans residues 1376–1548; it reads VSGYTLGKTV…PSESAGRAVK (173 aa). Residues 1507–1663 form a C-terminal hotdog fold region; that stretch reads DEVIQGQSIY…FSARSMSELF (157 aa). The Carrier domain maps to 1711-1785; the sequence is TELWAKLLPV…GILAFLQSTL (75 aa). S1745 carries the post-translational modification O-(pantetheine 4'-phosphoryl)serine. Residues 1789 to 1820 are disordered; that stretch reads GEDDASQSSDAASSSRNTPPSSNDGILATPSP. The span at 1794 to 1803 shows a compositional bias: low complexity; the sequence is SQSSDAASSS. Positions 2015-2197 are methyltransferase domain; that stretch reads FQLMADFLSR…DAGYKHVEWT (183 aa). The NADPH-binding (R) domain stretch occupies residues 2281–2526; it reads VTGTTGSLGS…TLRSFPAVEG (246 aa).

The cofactor is pantetheine 4'-phosphate.

Its pathway is secondary metabolite biosynthesis. Non-reducing polyketide synthase; part of the gene cluster that mediates the biosynthesis of sorbicillinoids, a diverse group of yellow secondary metabolites that restrict growth of competing pathogenic fungi but not of bacteria. Sorbicillinoids biosynthesis requires the action of two PKSs. SorA iteratively combines three acetyl units and the growing chain is modified by the ketoacyl reductase subunit, and optional by the enoyl reductase subunit in the second cycle. The polyketide is then handed over to the PKS SorB, which adds three more acetyl units, and two methyl groups. SorB releases an aldehyde, which undergoes spontaneous cyclization resulting in the formation of sorbicillin or 2',3'-dihydrosorbicillin. The monooxygenase sorC oxidizes sorbicillin and 2',3'-dihydrosorbicillin to 2',3'-dihydrosorbicillinol and sorbicillinol, respectively. The oxidoreductase sorD further converts sorbicillinol into oxosorbicillinol. Sorbicillinol is the building block for the other sorbicillinoids such as disorbicillinol, bisvertinolon, and dihydrobisvertinolone. This chain is Non-reducing polyketide synthase sorB, found in Penicillium rubens (strain ATCC 28089 / DSM 1075 / NRRL 1951 / Wisconsin 54-1255) (Penicillium chrysogenum).